We begin with the raw amino-acid sequence, 511 residues long: ATP synthase subunit alpha (511 aa).

Position 169–176 (169–176 (GDRQTGKT)) interacts with ATP.

Belongs to the ATPase alpha/beta chains family. As to quaternary structure, F-type ATPases have 2 components, CF(1) - the catalytic core - and CF(0) - the membrane proton channel. CF(1) has five subunits: alpha(3), beta(3), gamma(1), delta(1), epsilon(1). CF(0) has three main subunits: a(1), b(2) and c(9-12). The alpha and beta chains form an alternating ring which encloses part of the gamma chain. CF(1) is attached to CF(0) by a central stalk formed by the gamma and epsilon chains, while a peripheral stalk is formed by the delta and b chains.

It localises to the cell inner membrane. It catalyses the reaction ATP + H2O + 4 H(+)(in) = ADP + phosphate + 5 H(+)(out). Its function is as follows. Produces ATP from ADP in the presence of a proton gradient across the membrane. The alpha chain is a regulatory subunit. The protein is ATP synthase subunit alpha of Janthinobacterium sp. (strain Marseille) (Minibacterium massiliensis).